A 234-amino-acid chain; its full sequence is Large ribosomal subunit protein uL1 (234 aa).

It belongs to the universal ribosomal protein uL1 family. As to quaternary structure, part of the 50S ribosomal subunit.

Binds directly to 23S rRNA. The L1 stalk is quite mobile in the ribosome, and is involved in E site tRNA release. Functionally, protein L1 is also a translational repressor protein, it controls the translation of the L11 operon by binding to its mRNA. In Salmonella gallinarum (strain 287/91 / NCTC 13346), this protein is Large ribosomal subunit protein uL1.